Here is a 391-residue protein sequence, read N- to C-terminus: Processive diacylglycerol beta-glucosyltransferase (391 aa).

The protein belongs to the glycosyltransferase 28 family. UgtP subfamily.

The protein resides in the cell membrane. It carries out the reaction a 1,2-diacyl-3-O-(beta-D-glucopyranosyl)-sn-glycerol + UDP-alpha-D-glucose = a 1,2-diacyl-3-O-(beta-D-Glc-(1-&gt;6)-beta-D-Glc)-sn-glycerol + UDP + H(+). It catalyses the reaction a 1,2-diacyl-sn-glycerol + UDP-alpha-D-glucose = a 1,2-diacyl-3-O-(beta-D-glucopyranosyl)-sn-glycerol + UDP + H(+). The protein operates within glycolipid metabolism; diglucosyl-diacylglycerol biosynthesis. In terms of biological role, processive glucosyltransferase involved in the biosynthesis of both the bilayer- and non-bilayer-forming membrane glucolipids. Is able to successively transfer two glucosyl residues to diacylglycerol (DAG), thereby catalyzing the formation of beta-monoglucosyl-DAG (3-O-(beta-D-glucopyranosyl)-1,2-diacyl-sn-glycerol) and beta-diglucosyl-DAG (3-O-(beta-D-glucopyranosyl-beta-(1-&gt;6)-D-glucopyranosyl)-1,2-diacyl-sn-glycerol). Beta-diglucosyl-DAG is the predominant glycolipid found in Bacillales and is also used as a membrane anchor for lipoteichoic acid (LTA). This is Processive diacylglycerol beta-glucosyltransferase from Staphylococcus aureus (strain MRSA252).